The following is a 295-amino-acid chain: 4-hydroxy-tetrahydrodipicolinate synthase (295 aa).

Thr-46 is a pyruvate binding site. Tyr-135 (proton donor/acceptor) is an active-site residue. Lys-164 serves as the catalytic Schiff-base intermediate with substrate. Position 205 (Ile-205) interacts with pyruvate.

This sequence belongs to the DapA family. In terms of assembly, homotetramer; dimer of dimers.

Its subcellular location is the cytoplasm. It carries out the reaction L-aspartate 4-semialdehyde + pyruvate = (2S,4S)-4-hydroxy-2,3,4,5-tetrahydrodipicolinate + H2O + H(+). Its pathway is amino-acid biosynthesis; L-lysine biosynthesis via DAP pathway; (S)-tetrahydrodipicolinate from L-aspartate: step 3/4. Its function is as follows. Catalyzes the condensation of (S)-aspartate-beta-semialdehyde [(S)-ASA] and pyruvate to 4-hydroxy-tetrahydrodipicolinate (HTPA). The chain is 4-hydroxy-tetrahydrodipicolinate synthase from Wolinella succinogenes (strain ATCC 29543 / DSM 1740 / CCUG 13145 / JCM 31913 / LMG 7466 / NCTC 11488 / FDC 602W) (Vibrio succinogenes).